Here is a 236-residue protein sequence, read N- to C-terminus: Small ribosomal subunit protein uS2c (236 aa).

Belongs to the universal ribosomal protein uS2 family.

It is found in the plastid. It localises to the chloroplast. In Nicotiana tabacum (Common tobacco), this protein is Small ribosomal subunit protein uS2c (rps2).